The primary structure comprises 103 residues: MSKQKIRIRLKAFDYKLIDQSAAEIVDTAKRTGAIVKGPVPLPTRMKRFDILRSPHVNKTSRDQLEIRTHQRLMDIVDPTDKTVDALMKLDLPAGVDVEIKLQ.

It belongs to the universal ribosomal protein uS10 family. As to quaternary structure, part of the 30S ribosomal subunit.

In terms of biological role, involved in the binding of tRNA to the ribosomes. The polypeptide is Small ribosomal subunit protein uS10 (Verminephrobacter eiseniae (strain EF01-2)).